Reading from the N-terminus, the 95-residue chain is MTKSELIEKLATRQSQLSAKEVESAIKEMLEQMATTLESGDRIEIRGFGSFSLHYRAPRTGRNPKTGSSVELEGKYVPHFKPGKELRERVDAVNV.

It belongs to the bacterial histone-like protein family. As to quaternary structure, heterodimer of an alpha and a beta chain.

Functionally, this protein is one of the two subunits of integration host factor, a specific DNA-binding protein that functions in genetic recombination as well as in transcriptional and translational control. In Shewanella putrefaciens (strain CN-32 / ATCC BAA-453), this protein is Integration host factor subunit beta.